A 477-amino-acid chain; its full sequence is Protoporphyrinogen oxidase (477 aa).

FAD contacts are provided by residues glycine 9–glycine 14, tryptophan 42, glycine 57–glycine 60, valine 257, alanine 449, and valine 454–valine 456.

The protein belongs to the protoporphyrinogen/coproporphyrinogen oxidase family. Protoporphyrinogen oxidase subfamily. As to quaternary structure, monomer. Homodimer. FAD is required as a cofactor.

Its subcellular location is the mitochondrion inner membrane. It carries out the reaction protoporphyrinogen IX + 3 O2 = protoporphyrin IX + 3 H2O2. The protein operates within porphyrin-containing compound metabolism; protoporphyrin-IX biosynthesis; protoporphyrin-IX from protoporphyrinogen-IX: step 1/1. Inhibited by acifluorfen. Catalyzes the 6-electron oxidation of protoporphyrinogen-IX to form protoporphyrin-IX. This is Protoporphyrinogen oxidase (Ppox) from Mus musculus (Mouse).